The primary structure comprises 490 residues: Hydroxysteroid dehydrogenase-like protein 2 (490 aa).

NADP(+) contacts are provided by residues 17-23, lysine 42, and aspartate 74; that span reads GASRGIG. Residue lysine 42 is modified to N6-(2-hydroxyisobutyryl)lysine. Position 116 is an N6-acetyllysine (lysine 116). Tyrosine 168 serves as the catalytic Proton acceptor. Lysine 172 serves as a coordination point for NADP(+). The span at 282–301 shows a compositional bias: basic and acidic residues; that stretch reads MEEKESNDSVPEVKEEKLQL. Positions 282 to 370 are disordered; the sequence is MEEKESNDSV…PRQQPQPFVQ (89 aa). A compositionally biased stretch (low complexity) spans 302-367; the sequence is QEESQLQKQP…QPRPRQQPQP (66 aa). Positions 380–487 constitute an SCP2 domain; the sequence is GAVEETFRIV…KLEKLMTQMN (108 aa). N6-succinyllysine is present on lysine 390.

Belongs to the short-chain dehydrogenases/reductases (SDR) family. In terms of tissue distribution, widely expressed.

Its subcellular location is the peroxisome. The protein resides in the mitochondrion. Functionally, has apparently no steroid dehydrogenase activity. Controls bile acid (BA) and lipid metabolism in response to nutritional cues. The sequence is that of Hydroxysteroid dehydrogenase-like protein 2 (Hsdl2) from Mus musculus (Mouse).